We begin with the raw amino-acid sequence, 75 residues long: Cytochrome c oxidase subunit 6C (75 aa).

The Mitochondrial matrix segment spans residues 1–13 (MASSALAKPQMRG). The helical transmembrane segment at 14 to 54 (LLARRLRIHIVGAFVVSLGVAAFYKYAVAEPRKKAYADFYR) threads the bilayer. At 55-75 (NYDSVKYFEEMRKAGVFQSVK) the chain is on the mitochondrial intermembrane side.

It belongs to the cytochrome c oxidase subunit 6c family. As to quaternary structure, component of the cytochrome c oxidase (complex IV, CIV), a multisubunit enzyme composed of 14 subunits. The complex is composed of a catalytic core of 3 subunits MT-CO1, MT-CO2 and MT-CO3, encoded in the mitochondrial DNA, and 11 supernumerary subunits COX4I, COX5A, COX5B, COX6A, COX6B, COX6C, COX7A, COX7B, COX7C, COX8 and NDUFA4, which are encoded in the nuclear genome. The complex exists as a monomer or a dimer and forms supercomplexes (SCs) in the inner mitochondrial membrane with NADH-ubiquinone oxidoreductase (complex I, CI) and ubiquinol-cytochrome c oxidoreductase (cytochrome b-c1 complex, complex III, CIII), resulting in different assemblies (supercomplex SCI(1)III(2)IV(1) and megacomplex MCI(2)III(2)IV(2)).

The protein localises to the mitochondrion inner membrane. Its pathway is energy metabolism; oxidative phosphorylation. In terms of biological role, component of the cytochrome c oxidase, the last enzyme in the mitochondrial electron transport chain which drives oxidative phosphorylation. The respiratory chain contains 3 multisubunit complexes succinate dehydrogenase (complex II, CII), ubiquinol-cytochrome c oxidoreductase (cytochrome b-c1 complex, complex III, CIII) and cytochrome c oxidase (complex IV, CIV), that cooperate to transfer electrons derived from NADH and succinate to molecular oxygen, creating an electrochemical gradient over the inner membrane that drives transmembrane transport and the ATP synthase. Cytochrome c oxidase is the component of the respiratory chain that catalyzes the reduction of oxygen to water. Electrons originating from reduced cytochrome c in the intermembrane space (IMS) are transferred via the dinuclear copper A center (CU(A)) of subunit 2 and heme A of subunit 1 to the active site in subunit 1, a binuclear center (BNC) formed by heme A3 and copper B (CU(B)). The BNC reduces molecular oxygen to 2 water molecules using 4 electrons from cytochrome c in the IMS and 4 protons from the mitochondrial matrix. The polypeptide is Cytochrome c oxidase subunit 6C (COX6C) (Nycticebus coucang (Slow loris)).